The following is an 838-amino-acid chain: Protein P (838 aa).

Residues 1–179 (MPLSYQHFRK…FCGSPYSWEQ (179 aa)) form a terminal protein domain (TP) region. Residues 180–341 (ELQHSQRHGD…YCLSHLVNLL (162 aa)) are spacer. Positions 218-242 (LGLQPHQGPLATSQPGRSGSIRPRA) are disordered. The tract at residues 342 to 685 (EDWGPCVEHG…YLNLYPVARQ (344 aa)) is polymerase/reverse transcriptase domain (RT). The Reverse transcriptase domain maps to 352–595 (EHHIRIPRTP…YSLNFMGYVI (244 aa)). 3 residues coordinate Mg(2+): D424, D546, and D547.

Belongs to the hepadnaviridae P protein family.

It carries out the reaction DNA(n) + a 2'-deoxyribonucleoside 5'-triphosphate = DNA(n+1) + diphosphate. It catalyses the reaction Endonucleolytic cleavage to 5'-phosphomonoester.. With respect to regulation, activated by host HSP70 and HSP40 in vitro to be able to bind the epsilon loop of the pgRNA. Because deletion of the RNase H region renders the protein partly chaperone-independent, the chaperones may be needed indirectly to relieve occlusion of the RNA-binding site by this domain. Inhibited by several reverse-transcriptase inhibitors: Lamivudine, Adefovir and Entecavir. Multifunctional enzyme that converts the viral RNA genome into dsDNA in viral cytoplasmic capsids. This enzyme displays a DNA polymerase activity that can copy either DNA or RNA templates, and a ribonuclease H (RNase H) activity that cleaves the RNA strand of RNA-DNA heteroduplexes in a partially processive 3'- to 5'-endonucleasic mode. Neo-synthesized pregenomic RNA (pgRNA) are encapsidated together with the P protein, and reverse-transcribed inside the nucleocapsid. Initiation of reverse-transcription occurs first by binding the epsilon loop on the pgRNA genome, and is initiated by protein priming, thereby the 5'-end of (-)DNA is covalently linked to P protein. Partial (+)DNA is synthesized from the (-)DNA template and generates the relaxed circular DNA (RC-DNA) genome. After budding and infection, the RC-DNA migrates in the nucleus, and is converted into a plasmid-like covalently closed circular DNA (cccDNA). The activity of P protein does not seem to be necessary for cccDNA generation, and is presumably released from (+)DNA by host nuclear DNA repair machinery. The polypeptide is Protein P (Homo sapiens (Human)).